Reading from the N-terminus, the 256-residue chain is Trans-aconitate 2-methyltransferase (256 aa).

The protein belongs to the methyltransferase superfamily. Tam family.

The protein localises to the cytoplasm. It catalyses the reaction trans-aconitate + S-adenosyl-L-methionine = (E)-3-(methoxycarbonyl)pent-2-enedioate + S-adenosyl-L-homocysteine. Its function is as follows. Catalyzes the S-adenosylmethionine monomethyl esterification of trans-aconitate. This is Trans-aconitate 2-methyltransferase from Rhodopseudomonas palustris (strain BisB18).